An 833-amino-acid polypeptide reads, in one-letter code: MGGGSNNSHNMDNGKYVRYTPEQVEALERLYNDCPKPSSMRRQQLIRECPILSNIEPKQIKVWFQNRRCREKQRKEASRLQAVNRKLTAMNKLLMEENDRLQKQVSHLVYENSYFRQHPQNQGNLATTDTSCESVVTSGQHHLTPQHQPRDASPAGLLSIADETLTEFISKATGTAVEWVQMPGMKPGPDSIGIVAISHGCTGIAARACGLVGLDPTRVAEILKDKPCWLRDCRSLDIVNVLSTANGGTLELIYMQLYAPTTLAPARDFWMLRYTSVMEDGSLVICERSLNNTQNGPSMPPSPHFVRAEILPSGYLIRPCEGGGSILHIVDHFDLEPWSVPEVLRSLYESSTLLAQRTTMAALRYLRQISQEISQPNVTGWGRRPAALRALSQRLSKGFNEAVNGFSDEGWSILESDGIDDVTLLVNSSPTKMMMTSSLPFANGYTSMPSAVLCAKASMLLQNVPPSILLRFLREHRQEWADNSIDAYSAAAIKAGPCSLPIPRPGSFGGQVILPLAHTIENEEFMEVIKLESLGHYQEDMMMPADIFLLQMCSGVDENAVESCAELIFAPIDASFSDDAPIIPSGFRIIPLDSKSEGLSPNRTLDLASALDVGSRTAGDSCGSRGNSKSVMTIAFQLAFEMHMQENVASMARQYVRSVIASVQRVALALSPSSHQLSGLRPPPASPEAHTLARWISHSYRCYLGVDLLKPHGTDLLKSLWHHPDAVMCCSLKALSPVFTFANQAGLDMLETTLVALQDITLDKIFDNNNGKKTLSSEFPQIMQQGFMCMDGGICMSSMGRAVTYEKAVGWKVLNDDEDPHCICFMFLNWSFI.

A DNA-binding region (homeobox) is located at residues 12–75 (DNGKYVRYTP…NRRCREKQRK (64 aa)). Positions 70 to 108 (REKQRKEASRLQAVNRKLTAMNKLLMEENDRLQKQVSHL) form a coiled coil. The START domain maps to 150–378 (RDASPAGLLS…ISQEISQPNV (229 aa)).

The protein belongs to the HD-ZIP homeobox family. Class III subfamily. As to quaternary structure, interacts with ESR1 and ESR2. Interacts with ZPR3.

The protein localises to the nucleus. Probable transcription factor involved in the regulation of vascular development. May promote differentiation of precambial and cambial cells. This is Homeobox-leucine zipper protein ATHB-8 (ATHB-8) from Arabidopsis thaliana (Mouse-ear cress).